Here is a 239-residue protein sequence, read N- to C-terminus: 1-(5-phosphoribosyl)-5-[(5-phosphoribosylamino)methylideneamino] imidazole-4-carboxamide isomerase (239 aa).

Aspartate 8 acts as the Proton acceptor in catalysis. Residue aspartate 129 is the Proton donor of the active site.

This sequence belongs to the HisA/HisF family.

It localises to the cytoplasm. The enzyme catalyses 1-(5-phospho-beta-D-ribosyl)-5-[(5-phospho-beta-D-ribosylamino)methylideneamino]imidazole-4-carboxamide = 5-[(5-phospho-1-deoxy-D-ribulos-1-ylimino)methylamino]-1-(5-phospho-beta-D-ribosyl)imidazole-4-carboxamide. It participates in amino-acid biosynthesis; L-histidine biosynthesis; L-histidine from 5-phospho-alpha-D-ribose 1-diphosphate: step 4/9. The polypeptide is 1-(5-phosphoribosyl)-5-[(5-phosphoribosylamino)methylideneamino] imidazole-4-carboxamide isomerase (Bacillus thuringiensis subsp. konkukian (strain 97-27)).